A 29-amino-acid chain; its full sequence is Cytochrome c oxidase subunit 7A1, mitochondrial (29 aa).

The segment covering 1-13 (LENRVAEKQKLFQ) has biased composition (basic and acidic residues). Residues 1 to 29 (LENRVAEKQKLFQEDNGLPVHLKGGATDN) are disordered.

This sequence belongs to the cytochrome c oxidase VIIa family. As to quaternary structure, component of the complex IV (CIV, cytochrome c oxidase), a multisubunit enzyme composed of 14 subunits. The complex is composed of a catalytic core of 3 subunits MT-CO1, MT-CO2 and MT-CO3, encoded in the mitochondrial DNA, and 11 supernumerary subunits COX4I1 (or COX4I2), COX5A, COX5B, COX6A2 (or COX6A1), COX6B1 (or COX6B2), COX6C, COX7A1 (or COX7A2), COX7B, COX7C, COX8B and NDUFA4, which are encoded in the nuclear genome. The complex exists as a monomer or a dimer and forms supercomplexes (SCs) in the inner mitochondrial membrane with NADH-ubiquinone oxidoreductase (complex I, CI) and ubiquinol-cytochrome c oxidoreductase (cytochrome b-c1 complex, complex III, CIII), resulting in different assemblies (supercomplex SCI(1)III(2)IV(1) and megacomplex MCI(2)III(2)IV(2)).

The protein resides in the mitochondrion inner membrane. It participates in energy metabolism; oxidative phosphorylation. In terms of biological role, component of the mitochondrial respiratory complex IV (CIV, also named cytochrome c oxidase complex), the last enzyme in the mitochondrial electron transport chain which drives oxidative phosphorylation. The CIV complex is the component of the respiratory chain that catalyzes the reduction of oxygen to water. Acts as an assembly factor that specifically drives the homodimerization of CIV complexes, mediating the formation of mitochondrial respiratory supercomplexes (respirasomes) containing two CIV: supercomplxes with two molecules of CIV show improved activity. Despite being highly expressed in brown adipose tissue, not required for thermogenesis. In Ovis aries (Sheep), this protein is Cytochrome c oxidase subunit 7A1, mitochondrial (COX7A1).